Here is a 146-residue protein sequence, read N- to C-terminus: UPF0260 protein VP2169 (146 aa).

It belongs to the UPF0260 family.

The protein is UPF0260 protein VP2169 of Vibrio parahaemolyticus serotype O3:K6 (strain RIMD 2210633).